The following is a 244-amino-acid chain: Ribosomal RNA small subunit methyltransferase G (244 aa).

S-adenosyl-L-methionine is bound by residues G84, F89, 107–109 (DST), 135–136 (AE), and R154.

Belongs to the methyltransferase superfamily. RNA methyltransferase RsmG family.

It is found in the cytoplasm. Its function is as follows. Specifically methylates the N7 position of a guanine in 16S rRNA. In Nostoc punctiforme (strain ATCC 29133 / PCC 73102), this protein is Ribosomal RNA small subunit methyltransferase G.